The chain runs to 879 residues: Leucine--tRNA ligase (879 aa).

The 'HIGH' region motif lies at 45–55; sequence PYPSGALHMGH. Residues 637–641 carry the 'KMSKS' region motif; sequence KMSKS. Residue Lys640 participates in ATP binding.

It belongs to the class-I aminoacyl-tRNA synthetase family.

Its subcellular location is the cytoplasm. It catalyses the reaction tRNA(Leu) + L-leucine + ATP = L-leucyl-tRNA(Leu) + AMP + diphosphate. The polypeptide is Leucine--tRNA ligase (Xylella fastidiosa (strain M23)).